The primary structure comprises 217 residues: Large ribosomal subunit protein uL4 (217 aa).

A disordered region spans residues 42–100 (RAAARQGTHSTKTRGDVSGGGRKPYRQKGTGRARQGSTRAPQFTGGGVVHGPKPRDYSQ).

The protein belongs to the universal ribosomal protein uL4 family. Part of the 50S ribosomal subunit.

Functionally, one of the primary rRNA binding proteins, this protein initially binds near the 5'-end of the 23S rRNA. It is important during the early stages of 50S assembly. It makes multiple contacts with different domains of the 23S rRNA in the assembled 50S subunit and ribosome. Its function is as follows. Forms part of the polypeptide exit tunnel. The sequence is that of Large ribosomal subunit protein uL4 from Mycolicibacterium paratuberculosis (strain ATCC BAA-968 / K-10) (Mycobacterium paratuberculosis).